The following is a 68-amino-acid chain: Tetrahydromethanopterin S-methyltransferase subunit F (68 aa).

The helical transmembrane segment at 45–65 threads the bilayer; that stretch reads IAIGFLLAVLLVGVPAMMSIL.

This sequence belongs to the MtrF family. In terms of assembly, the complex is composed of 8 subunits; MtrA, MtrB, MtrC, MtrD, MtrE, MtrF, MtrG and MtrH.

The protein localises to the cell membrane. The catalysed reaction is 5-methyl-5,6,7,8-tetrahydromethanopterin + coenzyme M + 2 Na(+)(in) = 5,6,7,8-tetrahydromethanopterin + methyl-coenzyme M + 2 Na(+)(out). It functions in the pathway one-carbon metabolism; methanogenesis from CO(2); methyl-coenzyme M from 5,10-methylene-5,6,7,8-tetrahydromethanopterin: step 2/2. In terms of biological role, part of a complex that catalyzes the formation of methyl-coenzyme M and tetrahydromethanopterin from coenzyme M and methyl-tetrahydromethanopterin. This is an energy-conserving, sodium-ion translocating step. The chain is Tetrahydromethanopterin S-methyltransferase subunit F (mtrF) from Methanothermobacter marburgensis (strain ATCC BAA-927 / DSM 2133 / JCM 14651 / NBRC 100331 / OCM 82 / Marburg) (Methanobacterium thermoautotrophicum).